We begin with the raw amino-acid sequence, 215 residues long: Probable GTP-binding protein EngB (215 aa).

The 175-residue stretch at 26–200 (EGIEVAFAGR…RAKLDEWFAP (175 aa)) folds into the EngB-type G domain. GTP contacts are provided by residues 34–41 (GRSNAGKS), 61–65 (GRTQL), 79–82 (DLPG), 146–149 (TKAD), and 179–181 (FSS). S41 and T63 together coordinate Mg(2+).

This sequence belongs to the TRAFAC class TrmE-Era-EngA-EngB-Septin-like GTPase superfamily. EngB GTPase family. It depends on Mg(2+) as a cofactor.

Necessary for normal cell division and for the maintenance of normal septation. This chain is Probable GTP-binding protein EngB, found in Aliivibrio fischeri (strain ATCC 700601 / ES114) (Vibrio fischeri).